The sequence spans 128 residues: uncharacterized protein (128 aa).

The protein resides in the mitochondrion. This is an uncharacterized protein from Saccharomyces cerevisiae (strain ATCC 204508 / S288c) (Baker's yeast).